We begin with the raw amino-acid sequence, 508 residues long: tRNA-2-methylthio-N(6)-dimethylallyladenosine synthase (508 aa).

The region spanning 13-131 (KTYEVRTYGC…LPVLLERARV (119 aa)) is the MTTase N-terminal domain. Positions 22, 60, 94, 168, 172, and 175 each coordinate [4Fe-4S] cluster. Residues 154 to 385 (RESAYAAWVS…ALQEEISWDE (232 aa)) enclose the Radical SAM core domain. The TRAM domain maps to 387 to 455 (KKQVGRTLEL…PHHLLAEGPV (69 aa)).

It belongs to the methylthiotransferase family. MiaB subfamily. As to quaternary structure, monomer. The cofactor is [4Fe-4S] cluster.

It is found in the cytoplasm. The enzyme catalyses N(6)-dimethylallyladenosine(37) in tRNA + (sulfur carrier)-SH + AH2 + 2 S-adenosyl-L-methionine = 2-methylsulfanyl-N(6)-dimethylallyladenosine(37) in tRNA + (sulfur carrier)-H + 5'-deoxyadenosine + L-methionine + A + S-adenosyl-L-homocysteine + 2 H(+). Functionally, catalyzes the methylthiolation of N6-(dimethylallyl)adenosine (i(6)A), leading to the formation of 2-methylthio-N6-(dimethylallyl)adenosine (ms(2)i(6)A) at position 37 in tRNAs that read codons beginning with uridine. In Streptomyces avermitilis (strain ATCC 31267 / DSM 46492 / JCM 5070 / NBRC 14893 / NCIMB 12804 / NRRL 8165 / MA-4680), this protein is tRNA-2-methylthio-N(6)-dimethylallyladenosine synthase.